The chain runs to 227 residues: 2-C-methyl-D-erythritol 4-phosphate cytidylyltransferase (227 aa).

It belongs to the IspD/TarI cytidylyltransferase family. IspD subfamily.

It carries out the reaction 2-C-methyl-D-erythritol 4-phosphate + CTP + H(+) = 4-CDP-2-C-methyl-D-erythritol + diphosphate. It participates in isoprenoid biosynthesis; isopentenyl diphosphate biosynthesis via DXP pathway; isopentenyl diphosphate from 1-deoxy-D-xylulose 5-phosphate: step 2/6. In terms of biological role, catalyzes the formation of 4-diphosphocytidyl-2-C-methyl-D-erythritol from CTP and 2-C-methyl-D-erythritol 4-phosphate (MEP). The polypeptide is 2-C-methyl-D-erythritol 4-phosphate cytidylyltransferase (Thermosipho melanesiensis (strain DSM 12029 / CIP 104789 / BI429)).